The following is a 302-amino-acid chain: NAD kinase (302 aa).

The active-site Proton acceptor is aspartate 79. NAD(+) is bound by residues 79 to 80 (DG), 153 to 154 (ND), arginine 181, aspartate 183, 194 to 199 (TAYALS), alanine 218, and glutamine 252.

This sequence belongs to the NAD kinase family. The cofactor is a divalent metal cation.

It is found in the cytoplasm. The catalysed reaction is NAD(+) + ATP = ADP + NADP(+) + H(+). Its function is as follows. Involved in the regulation of the intracellular balance of NAD and NADP, and is a key enzyme in the biosynthesis of NADP. Catalyzes specifically the phosphorylation on 2'-hydroxyl of the adenosine moiety of NAD to yield NADP. The sequence is that of NAD kinase from Ralstonia nicotianae (strain ATCC BAA-1114 / GMI1000) (Ralstonia solanacearum).